Consider the following 335-residue polypeptide: uncharacterized protein (335 aa).

Positions 1 to 21 (MDKKARAHTVIVCLVGALSLA) are cleaved as a signal peptide. A lipid anchor (N-palmitoyl cysteine) is attached at Cys-22. A lipid anchor (S-diacylglycerol cysteine) is attached at Cys-22.

Its subcellular location is the cell membrane. This is an uncharacterized protein from Treponema pallidum (strain Nichols).